A 152-amino-acid polypeptide reads, in one-letter code: Aspartate carbamoyltransferase regulatory chain (152 aa).

Positions 108, 113, 136, and 139 each coordinate Zn(2+).

This sequence belongs to the PyrI family. Contains catalytic and regulatory chains. It depends on Zn(2+) as a cofactor.

Its function is as follows. Involved in allosteric regulation of aspartate carbamoyltransferase. The protein is Aspartate carbamoyltransferase regulatory chain of Pyrococcus furiosus (strain ATCC 43587 / DSM 3638 / JCM 8422 / Vc1).